Here is a 546-residue protein sequence, read N- to C-terminus: Sodium/hydrogen exchanger 2 (546 aa).

The Cytoplasmic segment spans residues Met-1 to Ser-21. Residues Val-22–Leu-42 traverse the membrane as a helical segment. Residues Glu-43–Trp-47 lie on the Vacuolar side of the membrane. A helical transmembrane segment spans residues Met-48–Ile-68. The Cytoplasmic portion of the chain corresponds to Ser-69–His-75. The helical intramembrane region spans Leu-76–Ala-96. The Cytoplasmic portion of the chain corresponds to Gly-97–Thr-111. A helical membrane pass occupies residues Ile-112–Ile-132. Residues Gln-133–Phe-148 lie on the Vacuolar side of the membrane. 2 intramembrane regions (helical) span residues Leu-149 to Asn-168 and Leu-174 to Phe-194. The Vacuolar segment spans residues Asn-195–Phe-218. The helical transmembrane segment at Tyr-219–Ile-239 threads the bilayer. The Cytoplasmic segment spans residues Lys-240–Tyr-264. A helical membrane pass occupies residues Met-265–Met-285. At Ser-286 to Ala-304 the chain is on the vacuolar side. N-linked (GlcNAc...) asparagine glycosylation is present at Asn-292. The chain crosses the membrane as a helical span at residues Phe-305–Leu-325. Over Asp-326 to Ser-344 the chain is Cytoplasmic. Residues Ser-345–Leu-365 form a helical membrane-spanning segment. The Vacuolar segment spans residues Ser-366–Gln-381. The helical transmembrane segment at Gln-382–Asn-402 threads the bilayer. The Cytoplasmic portion of the chain corresponds to Lys-403–Asn-415. A helical membrane pass occupies residues Ala-416–Leu-436. Residues Thr-437–Pro-546 are Vacuolar-facing.

It belongs to the monovalent cation:proton antiporter 1 (CPA1) transporter (TC 2.A.36) family. Expressed in roots and shoots.

Its subcellular location is the vacuole membrane. The enzyme catalyses Na(+)(in) + H(+)(out) = Na(+)(out) + H(+)(in). The catalysed reaction is K(+)(in) + H(+)(out) = K(+)(out) + H(+)(in). Functionally, acts in low affinity electroneutral exchange of protons for cations such as Na(+) or K(+) across membranes. May also exchange Li(+) and Cs(+) with a lower affinity. Involved in vacuolar ion compartmentalization necessary for cell volume regulation and cytoplasmic Na(+) detoxification. The protein is Sodium/hydrogen exchanger 2 (NHX2) of Arabidopsis thaliana (Mouse-ear cress).